Reading from the N-terminus, the 136-residue chain is Regulator of nucleoside diphosphate kinase (136 aa).

Belongs to the Rnk family. As to quaternary structure, interacts with the RNA polymerase.

Its function is as follows. May act as an anti-Gre factor. This is Regulator of nucleoside diphosphate kinase from Escherichia coli O6:H1 (strain CFT073 / ATCC 700928 / UPEC).